The following is a 748-amino-acid chain: Sulfhydryl oxidase 1 (748 aa).

The N-terminal stretch at 1 to 32 (MRRCGRLSGPPSLLLLLLLLSPLLFSGPGAYA) is a signal peptide. Residues 33 to 159 (ARLSVLYSSS…RMRLIDALES (127 aa)) form the Thioredoxin domain. Residues cysteine 73 and cysteine 76 each act as nucleophile in the active site. 2 disulfide bridges follow: cysteine 73/cysteine 76 and cysteine 104/cysteine 113. N-linked (GlcNAc...) asparagine glycosylation is found at asparagine 133 and asparagine 246. A disulfide bond links cysteine 396 and cysteine 408. One can recognise an ERV/ALR sulfhydryl oxidase domain in the interval 399-506 (SEPHFRGFPC…EDPHFPKVQW (108 aa)). FAD contacts are provided by residues arginine 404, tryptophan 411, histidine 415, aspartate 454, histidine 458, 481–488 (WTSHNRVN), lysine 503, and tryptophan 506. Residues cysteine 452 and cysteine 455 are joined by a disulfide bond. Cysteine 512 and cysteine 515 are oxidised to a cystine. The interval 581–647 (GHEQAASAES…QENAPGQQHL (67 aa)) is disordered. The segment covering 628 to 638 (ERMEDHQRDMQ) has biased composition (basic and acidic residues). The chain crosses the membrane as a helical span at residues 711-731 (ISLCVGLYSVSFMGLLAMYTY).

This sequence belongs to the quiescin-sulfhydryl oxidase (QSOX) family. In terms of assembly, monomer. It depends on FAD as a cofactor. In terms of processing, N-glycosylated. O-glycosylated on Thr and Ser residues. As to expression, detected in skin (at protein level). Expressed in the seminal vesicles and skin.

The protein localises to the golgi apparatus membrane. It is found in the secreted. It catalyses the reaction 2 R'C(R)SH + O2 = R'C(R)S-S(R)CR' + H2O2. In terms of biological role, catalyzes the oxidation of sulfhydryl groups in peptide and protein thiols to disulfides with the reduction of oxygen to hydrogen peroxide. Plays a role in disulfide bond formation in a variety of extracellular proteins. In fibroblasts, required for normal incorporation of laminin into the extracellular matrix, and thereby for normal cell-cell adhesion and cell migration. The protein is Sulfhydryl oxidase 1 (Qsox1) of Mus musculus (Mouse).